The chain runs to 696 residues: UvrABC system protein C (696 aa).

One can recognise a GIY-YIG domain in the interval 16–95 (TEPGVYKFRD…IKRFDPRFNV (80 aa)). The 36-residue stretch at 208-243 (DKVTRKLNADMMAAAEELDFERAARLRDDLEAIDKV) folds into the UVR domain.

The protein belongs to the UvrC family. As to quaternary structure, interacts with UvrB in an incision complex.

It is found in the cytoplasm. The UvrABC repair system catalyzes the recognition and processing of DNA lesions. UvrC both incises the 5' and 3' sides of the lesion. The N-terminal half is responsible for the 3' incision and the C-terminal half is responsible for the 5' incision. This Corynebacterium glutamicum (strain ATCC 13032 / DSM 20300 / JCM 1318 / BCRC 11384 / CCUG 27702 / LMG 3730 / NBRC 12168 / NCIMB 10025 / NRRL B-2784 / 534) protein is UvrABC system protein C.